The primary structure comprises 645 residues: MDTNTSGEELLAKARKPYTITKQRERWTEDEHERFLEALRLYGRAWQRIEEHIGTKTAVQIRSHAQKFFTKLEKEAEVKGIPVCQALDIEIPPPRPKRKPNTPYPRKPGNNGTSSSQVSSAKDAKLVSSASSSQLNQAFLDLEKMPFSEKTSTGKENQDENCSGVSTVNKYPLPTKQVSGDIETSKTSTVDNAVQDVPKKNKDKDGNDGTTVHSMQNYPWHFHADIVNGNIAKCPQNHPSGMVSQDFMFHPMREETHGHANLQATTASATTTASHQAFPACHSQDDYRSFLQISSTFSNLIMSTLLQNPAAHAAATFAASVWPYASVGNSGDSSTPMSSSPPSITAIAAATVAAATAWWASHGLLPVCAPAPITCVPFSTVAVPTPAMTEMDTVENTQPFEKQNTALQDQNLASKSPASSSDDSDETGVTKLNADSKTNDDKIEEVVVTAAVHDSNTAQKKNLVDRSSCGSNTPSGSDAETDALDKMEKDKEDVKETDENQPDVIELNNRKIKMRDNNSNNNATTDSWKEVSEEGRIAFQALFARERLPQSFSPPQVAENVNRKQSDTSMPLAPNFKSQDSCAADQEGVVMIGVGTCKSLKTRQTGFKPYKRCSMEVKESQVGNINNQSDEKVCKRLRLEGEAST.

Phosphoserine is present on Ser6. In terms of domain architecture, HTH myb-type spans 19 to 73; it reads TITKQRERWTEDEHERFLEALRLYGRAWQRIEEHIGTKTAVQIRSHAQKFFTKLE. The H-T-H motif DNA-binding region spans 46 to 69; it reads WQRIEEHIGTKTAVQIRSHAQKFF. 4 disordered regions span residues 89 to 127, 149 to 212, 410 to 437, and 458 to 500; these read IEIPPPRPKRKPNTPYPRKPGNNGTSSSQVSSAKDAKLV, EKTS…GTTV, QNLASKSPASSSDDSDETGVTKLNADSK, and AQKK…TDEN. Residues 110–120 are compositionally biased toward polar residues; it reads NNGTSSSQVSS. The segment covering 149–158 has biased composition (basic and acidic residues); sequence EKTSTGKENQ. Residues 159 to 169 show a composition bias toward polar residues; the sequence is DENCSGVSTVN. Positions 197–207 are enriched in basic and acidic residues; it reads VPKKNKDKDGN. Residues 468–478 are compositionally biased toward polar residues; the sequence is SCGSNTPSGSD. Residues 483 to 498 are compositionally biased toward basic and acidic residues; it reads ALDKMEKDKEDVKETD.

Homodimer or heterodimer with CCA1. Interacts with CCA1 (via internal domain); independently of photoperiod. Functions probably as part of a large complex. Interacts with CKB1 and CKB3. Interacts with LNK1 and LNK2. Phosphorylated by CK2. In terms of tissue distribution, expressed in leaves, roots, stems, flowers and siliques.

The protein resides in the nucleus. Functionally, transcription factor involved in the circadian clock. Binds to the promoter region of APRR1/TOC1 and TCP21/CHE to repress their transcription. Represses both CCA1 and itself. May recognize the promoter of JMJ14 to regulates its expression during the night in a circadian manner. This is Protein LHY from Arabidopsis thaliana (Mouse-ear cress).